Reading from the N-terminus, the 518-residue chain is Alpha-ionylideneethane synthase abl3 (518 aa).

Disordered regions lie at residues 294–355 (AAPG…SVFE) and 440–466 (KAPPPPSPRRAVPADGEADSAAGQRSK). The segment covering 299–339 (TSSDNSSDNRSSSISSTSSTGTDGSGAGDASSVHSSGVHSD) has biased composition (low complexity).

The protein belongs to the alpha-ionylideneethane synthase family.

The protein operates within hormone biosynthesis. In terms of biological role, alpha-ionylideneethane synthase involved in the biosynthesis of abscisic acid (ABA), a phytohormone that acts antagonistically toward salicylic acid (SA), jasmonic acid (JA) and ethylene (ETH) signaling, to impede plant defense responses. During pathogen-host interaction, ABA plays a dual role in disease severity by increasing plant susceptibility and accelerating pathogenesis in the fungus itself. The first step of the pathway catalyzes the reaction from farnesyl diphosphate to alpha-ionylideneethane performed by the alpha-ionylideneethane synthase ABA3 via a three-step reaction mechanism involving 2 neutral intermediates, beta-farnesene and allofarnesene. The cytochrome P450 monooxygenase ABA1 might then be involved in the conversion of alpha-ionylideneethane to alpha-ionylideneacetic acid. Alpha-ionylideneacetic acid is further converted to abscisic acid in 2 steps involving the cytochrome P450 monooxygenase ABA2 and the short-chain dehydrogenase/reductase ABA4, via the intermediates 1'-deoxy-ABA or 1',4'-trans-diol-ABA, depending on the order of action of these 2 enzymes. ABA2 is responsible for the hydroxylation of carbon atom C-1' and ABA4 might be involved in the oxidation of the C-4' carbon atom. This chain is Alpha-ionylideneethane synthase abl3, found in Pyricularia oryzae (strain Y34) (Rice blast fungus).